A 347-amino-acid chain; its full sequence is Lipoyl synthase (347 aa).

The [4Fe-4S] cluster site is built by cysteine 55, cysteine 60, cysteine 66, cysteine 81, cysteine 85, cysteine 88, and serine 292. The Radical SAM core domain maps to 67–281; it reads WEDREATFLI…RDYGHDIGFA (215 aa).

Belongs to the radical SAM superfamily. Lipoyl synthase family. The cofactor is [4Fe-4S] cluster.

It is found in the cytoplasm. It carries out the reaction [[Fe-S] cluster scaffold protein carrying a second [4Fe-4S](2+) cluster] + N(6)-octanoyl-L-lysyl-[protein] + 2 oxidized [2Fe-2S]-[ferredoxin] + 2 S-adenosyl-L-methionine + 4 H(+) = [[Fe-S] cluster scaffold protein] + N(6)-[(R)-dihydrolipoyl]-L-lysyl-[protein] + 4 Fe(3+) + 2 hydrogen sulfide + 2 5'-deoxyadenosine + 2 L-methionine + 2 reduced [2Fe-2S]-[ferredoxin]. It participates in protein modification; protein lipoylation via endogenous pathway; protein N(6)-(lipoyl)lysine from octanoyl-[acyl-carrier-protein]: step 2/2. Catalyzes the radical-mediated insertion of two sulfur atoms into the C-6 and C-8 positions of the octanoyl moiety bound to the lipoyl domains of lipoate-dependent enzymes, thereby converting the octanoylated domains into lipoylated derivatives. The sequence is that of Lipoyl synthase from Corynebacterium kroppenstedtii (strain DSM 44385 / JCM 11950 / CIP 105744 / CCUG 35717).